A 669-amino-acid polypeptide reads, in one-letter code: MTTPDRLLQLRQQLQKASYAYYVLDAPVMEDSVYDQLYRELQRLEAENPELITPDSPTQRVGEQPASQFRSVAHNIPLYSLENAFNVQELQQWQERWQRIAPTIEKAEYVCELKIDGSAIALTYENGLLVRGVTRGDGTTGEEISQNIKTIRSIPVKLNLDNPPPTVEVRGEAFLPLEEFNRINHEREAQGESLFANPRNAAAGTLRQLDPKIVHQRRLQFFAYTLHLPGQEDKIQSQWQALEYLKKAGFMVNPHCQLCKGLDEVVAYFEDWEGARQRLPYMTDGVVVKINQYPLQRELGFTQKFPRWAIALKYPAEETPTVVKAIEVNVGRTGAVTPLAVMEPVQLAGTTVQRATLHNQDRIQELDIRVGDTVIIRKAGEIIPEVVRVMTELRPENTTPYIFPSHCPACGSPLVRPLEEAVIRCVNSSCSAILQGSLIHWASRNALDIQGLGEKVVITLLENRLVNSVADLYGLQVEQLLGLERFAQKSAEKLIAAIEVSKSQPWSRILFGLGIRHVGQVNAKLLSQQFPTVEKLSQASIPDLEGVYGIGPEIAEAVVNWFRNPGNQQLIQDLEELGLVLANQGIDQTKTDSGKLKGKTFVLTGTLPNLSRLEAQELIEQSGGKVTSSVSTKTDYVLLGDKPGSKAAKAESLGIKLLSEAEFLQLLEP.

NAD(+) contacts are provided by residues 31 to 35, 80 to 81, and E112; these read DSVYD and SL. K114 acts as the N6-AMP-lysine intermediate in catalysis. Residues R135, E172, K289, and K313 each coordinate NAD(+). 4 residues coordinate Zn(2+): C407, C410, C425, and C430. Residues 591-669 form the BRCT domain; that stretch reads TDSGKLKGKT…EAEFLQLLEP (79 aa).

This sequence belongs to the NAD-dependent DNA ligase family. LigA subfamily. Requires Mg(2+) as cofactor. It depends on Mn(2+) as a cofactor.

The enzyme catalyses NAD(+) + (deoxyribonucleotide)n-3'-hydroxyl + 5'-phospho-(deoxyribonucleotide)m = (deoxyribonucleotide)n+m + AMP + beta-nicotinamide D-nucleotide.. Functionally, DNA ligase that catalyzes the formation of phosphodiester linkages between 5'-phosphoryl and 3'-hydroxyl groups in double-stranded DNA using NAD as a coenzyme and as the energy source for the reaction. It is essential for DNA replication and repair of damaged DNA. This is DNA ligase from Synechocystis sp. (strain ATCC 27184 / PCC 6803 / Kazusa).